We begin with the raw amino-acid sequence, 214 residues long: Rac-like GTP-binding protein 3 (214 aa).

Gly15–Thr22 lines the GTP pocket. Residues Tyr37–Phe45 carry the Effector region motif. GTP-binding positions include Asp62–Gln66 and Thr120–Asp123.

Belongs to the small GTPase superfamily. Rho family. May be palmitoylated.

The protein resides in the cytoplasm. The protein localises to the membrane. Inactive GDP-bound Rho GTPases reside in the cytosol, are found in a complex with Rho GDP-dissociation inhibitors (Rho GDIs), and are released from the GDI protein in order to translocate to membranes upon activation. The protein is Rac-like GTP-binding protein 3 (RAC3) of Oryza sativa subsp. japonica (Rice).